The primary structure comprises 156 residues: ATP synthase subunit b (156 aa).

The chain crosses the membrane as a helical span at residues leucine 7–isoleucine 29.

The protein belongs to the ATPase B chain family. F-type ATPases have 2 components, F(1) - the catalytic core - and F(0) - the membrane proton channel. F(1) has five subunits: alpha(3), beta(3), gamma(1), delta(1), epsilon(1). F(0) has three main subunits: a(1), b(2) and c(10-14). The alpha and beta chains form an alternating ring which encloses part of the gamma chain. F(1) is attached to F(0) by a central stalk formed by the gamma and epsilon chains, while a peripheral stalk is formed by the delta and b chains.

Its subcellular location is the cell inner membrane. F(1)F(0) ATP synthase produces ATP from ADP in the presence of a proton or sodium gradient. F-type ATPases consist of two structural domains, F(1) containing the extramembraneous catalytic core and F(0) containing the membrane proton channel, linked together by a central stalk and a peripheral stalk. During catalysis, ATP synthesis in the catalytic domain of F(1) is coupled via a rotary mechanism of the central stalk subunits to proton translocation. In terms of biological role, component of the F(0) channel, it forms part of the peripheral stalk, linking F(1) to F(0). In Thiobacillus denitrificans (strain ATCC 25259 / T1), this protein is ATP synthase subunit b.